The primary structure comprises 272 residues: Indole-3-glycerol phosphate synthase (272 aa).

It belongs to the TrpC family.

The enzyme catalyses 1-(2-carboxyphenylamino)-1-deoxy-D-ribulose 5-phosphate + H(+) = (1S,2R)-1-C-(indol-3-yl)glycerol 3-phosphate + CO2 + H2O. It participates in amino-acid biosynthesis; L-tryptophan biosynthesis; L-tryptophan from chorismate: step 4/5. The protein is Indole-3-glycerol phosphate synthase of Mycobacteroides abscessus (strain ATCC 19977 / DSM 44196 / CCUG 20993 / CIP 104536 / JCM 13569 / NCTC 13031 / TMC 1543 / L948) (Mycobacterium abscessus).